Here is a 170-residue protein sequence, read N- to C-terminus: Adenine phosphoribosyltransferase (170 aa).

Belongs to the purine/pyrimidine phosphoribosyltransferase family. As to quaternary structure, homodimer.

Its subcellular location is the cytoplasm. The enzyme catalyses AMP + diphosphate = 5-phospho-alpha-D-ribose 1-diphosphate + adenine. It functions in the pathway purine metabolism; AMP biosynthesis via salvage pathway; AMP from adenine: step 1/1. Its function is as follows. Catalyzes a salvage reaction resulting in the formation of AMP, that is energically less costly than de novo synthesis. This chain is Adenine phosphoribosyltransferase, found in Lactococcus lactis subsp. cremoris (strain MG1363).